A 403-amino-acid polypeptide reads, in one-letter code: Phosphopentomutase (403 aa).

Mn(2+) is bound by residues Asp-13, Asp-298, His-303, Asp-339, His-340, and His-351.

The protein belongs to the phosphopentomutase family. It depends on Mn(2+) as a cofactor.

Its subcellular location is the cytoplasm. The catalysed reaction is 2-deoxy-alpha-D-ribose 1-phosphate = 2-deoxy-D-ribose 5-phosphate. The enzyme catalyses alpha-D-ribose 1-phosphate = D-ribose 5-phosphate. It participates in carbohydrate degradation; 2-deoxy-D-ribose 1-phosphate degradation; D-glyceraldehyde 3-phosphate and acetaldehyde from 2-deoxy-alpha-D-ribose 1-phosphate: step 1/2. Isomerase that catalyzes the conversion of deoxy-ribose 1-phosphate (dRib-1-P) and ribose 1-phosphate (Rib-1-P) to deoxy-ribose 5-phosphate (dRib-5-P) and ribose 5-phosphate (Rib-5-P), respectively. The sequence is that of Phosphopentomutase from Streptococcus suis (strain 05ZYH33).